We begin with the raw amino-acid sequence, 64 residues long: uncharacterized protein (64 aa).

2 consecutive transmembrane segments (helical) span residues isoleucine 4–tyrosine 24 and methionine 35–methionine 55.

It is found in the cell membrane. This is an uncharacterized protein from Bacillus subtilis (strain 168).